A 792-amino-acid polypeptide reads, in one-letter code: Leucine--tRNA ligase (792 aa).

The 'HIGH' region motif lies at 39-50; the sequence is PYPSAAGLHLGH. The 'KMSKS' region signature appears at 569-573; the sequence is KMSKS. Position 572 (K572) interacts with ATP.

Belongs to the class-I aminoacyl-tRNA synthetase family.

The protein resides in the cytoplasm. It catalyses the reaction tRNA(Leu) + L-leucine + ATP = L-leucyl-tRNA(Leu) + AMP + diphosphate. This is Leucine--tRNA ligase from Mycoplasma genitalium (strain ATCC 33530 / DSM 19775 / NCTC 10195 / G37) (Mycoplasmoides genitalium).